The chain runs to 634 residues: Extracellular metalloproteinase MEP (634 aa).

The signal sequence occupies residues Met1–Ala18. The propeptide occupies His19–Glu245. His429 contacts Zn(2+). Glu430 is a catalytic residue. Residue His433 coordinates Zn(2+).

This sequence belongs to the peptidase M36 family. Zn(2+) serves as cofactor.

It localises to the secreted. Secreted metalloproteinase that allows assimilation of proteinaceous substrates and probably acts as a virulence factor. This is Extracellular metalloproteinase MEP (MEP) from Neosartorya fischeri (strain ATCC 1020 / DSM 3700 / CBS 544.65 / FGSC A1164 / JCM 1740 / NRRL 181 / WB 181) (Aspergillus fischerianus).